The following is an 828-amino-acid chain: Protein ELFN1 (828 aa).

The N-terminal stretch at 1–27 (MAGRGWGALWVCVAAATLLHAGGLARA) is a signal peptide. Topologically, residues 28 to 418 (DCWLIEGDKG…VPSPSTATHY (391 aa)) are extracellular. An N-linked (GlcNAc...) asparagine glycan is attached at asparagine 59. 5 LRR repeats span residues 61 to 82 (TIVD…SLSR), 85 to 106 (NLTY…AFSG), 109 to 130 (NLQV…MLRG), 133 to 154 (KLEY…SFWE), and 157 to 178 (NIVN…TFAG). Asparagine 85, asparagine 90, and asparagine 122 each carry an N-linked (GlcNAc...) asparagine glycan. The LRRCT domain maps to 190–252 (NPFYCSCELL…LSKLQSVCTE (63 aa)). N-linked (GlcNAc...) asparagine glycosylation occurs at asparagine 210. The interval 259–291 (VVGPPRPASGRSQPGRSPPPPPPPEPSDMPCAD) is disordered. The span at 274-285 (RSPPPPPPPEPS) shows a compositional bias: pro residues. The 88-residue stretch at 312–399 (QAEARPLIKV…HNHTCLTICL (88 aa)) folds into the Fibronectin type-III domain. An LRR 6 repeat occupies 318 to 342 (LIKVKQLTQNSATITVQLPSPFHRM). Residue asparagine 376 is glycosylated (N-linked (GlcNAc...) asparagine). The helical transmembrane segment at 419–439 (IMTILGCLFGMVLVLGAVYYC) threads the bilayer. At 440-828 (LRRRRRQEEK…WKGVSAQHKS (389 aa)) the chain is on the cytoplasmic side. Serine 461 bears the Phosphoserine mark. Disordered stretches follow at residues 517–552 (TPKA…QSSV), 624–649 (LQRH…VRSP), and 696–732 (KGRQ…GLGR). Basic and acidic residues predominate over residues 529-541 (RTGDPPERRDCEL). Low complexity predominate over residues 632-649 (AAGPPRASTSSSGSVRSP). At serine 645 the chain carries Phosphoserine. A compositionally biased stretch (basic and acidic residues) spans 696–705 (KGRQYGEHRH). Pro residues predominate over residues 713-727 (AEPPAPPGPPPPPPH).

Interacts with PPP1CA.

The protein localises to the membrane. The protein resides in the cell projection. It localises to the dendrite. Its function is as follows. Postsynaptic protein that regulates circuit dynamics in the central nervous system by modulating the temporal dynamics of interneuron recruitment. Specifically present in excitatory synapses onto oriens-lacunosum molecular (OLM) interneurons and acts as a regulator of presynaptic release probability to direct the formation of highly facilitating pyramidal-OLM synapses. Inhibits phosphatase activity of protein phosphatase 1 (PP1) complexes. This is Protein ELFN1 (ELFN1) from Homo sapiens (Human).